A 114-amino-acid polypeptide reads, in one-letter code: rRNA-processing protein cgrA (114 aa).

Residues methionine 1 to asparagine 11 are compositionally biased toward polar residues. Positions methionine 1–serine 114 are disordered. A compositionally biased stretch (basic and acidic residues) spans tyrosine 39–lysine 93. The stretch at glutamate 40–arginine 101 forms a coiled coil. Residues methionine 94–serine 114 show a composition bias toward basic residues.

This sequence belongs to the CGR1 family.

Its subcellular location is the nucleus. The protein resides in the nucleolus. In terms of biological role, involved in nucleolar integrity and required for processing of the pre-rRNA for the 60S ribosome subunit. The polypeptide is rRNA-processing protein cgrA (cgrA) (Aspergillus fumigatus (strain ATCC MYA-4609 / CBS 101355 / FGSC A1100 / Af293) (Neosartorya fumigata)).